We begin with the raw amino-acid sequence, 158 residues long: Snaclec crotocetin-1 (158 aa).

An N-terminal signal peptide occupies residues 1–23; sequence MGRFIFVSFGLLVVFLSLSGTGA. Cystine bridges form between Cys-27/Cys-38, Cys-55/Cys-152, and Cys-127/Cys-144. The C-type lectin domain occupies 34–153; it reads YDQYCYRVIK…CEEKNLFVCK (120 aa).

It belongs to the snaclec family. In terms of assembly, heterodimer; disulfide-linked. Expressed by the venom gland.

Its subcellular location is the secreted. Its function is as follows. Interferes with one step of hemostasis (modulation of platelet aggregation, or coagulation cascade, for example). The chain is Snaclec crotocetin-1 from Crotalus durissus terrificus (South American rattlesnake).